Here is a 57-residue protein sequence, read N- to C-terminus: Large ribosomal subunit protein bL32 (57 aa).

Residues 1-20 (MAVPKKKTSKAKRDQRRATW) are compositionally biased toward basic residues. The disordered stretch occupies residues 1-24 (MAVPKKKTSKAKRDQRRATWRRQA).

The protein belongs to the bacterial ribosomal protein bL32 family.

The sequence is that of Large ribosomal subunit protein bL32 from Gloeothece citriformis (strain PCC 7424) (Cyanothece sp. (strain PCC 7424)).